Consider the following 399-residue polypeptide: CCA-adding enzyme (399 aa).

Residues glycine 33 and arginine 36 each contribute to the ATP site. Positions 33 and 36 each coordinate CTP. The Mg(2+) site is built by aspartate 46 and aspartate 48. The ATP site is built by arginine 117, aspartate 160, arginine 163, arginine 166, and arginine 169. Positions 117, 160, 163, 166, and 169 each coordinate CTP.

Belongs to the tRNA nucleotidyltransferase/poly(A) polymerase family. Bacterial CCA-adding enzyme type 3 subfamily. In terms of assembly, homodimer. The cofactor is Mg(2+).

It catalyses the reaction a tRNA precursor + 2 CTP + ATP = a tRNA with a 3' CCA end + 3 diphosphate. The enzyme catalyses a tRNA with a 3' CCA end + 2 CTP + ATP = a tRNA with a 3' CCACCA end + 3 diphosphate. Functionally, catalyzes the addition and repair of the essential 3'-terminal CCA sequence in tRNAs without using a nucleic acid template. Adds these three nucleotides in the order of C, C, and A to the tRNA nucleotide-73, using CTP and ATP as substrates and producing inorganic pyrophosphate. tRNA 3'-terminal CCA addition is required both for tRNA processing and repair. Also involved in tRNA surveillance by mediating tandem CCA addition to generate a CCACCA at the 3' terminus of unstable tRNAs. While stable tRNAs receive only 3'-terminal CCA, unstable tRNAs are marked with CCACCA and rapidly degraded. The protein is CCA-adding enzyme of Lactobacillus helveticus (strain DPC 4571).